A 219-amino-acid polypeptide reads, in one-letter code: Thiopurine S-methyltransferase (219 aa).

4 residues coordinate S-adenosyl-L-methionine: Trp-10, Leu-45, Glu-66, and Arg-123.

Belongs to the class I-like SAM-binding methyltransferase superfamily. TPMT family.

Its subcellular location is the cytoplasm. It catalyses the reaction S-adenosyl-L-methionine + a thiopurine = S-adenosyl-L-homocysteine + a thiopurine S-methylether.. This is Thiopurine S-methyltransferase from Marinobacter nauticus (strain ATCC 700491 / DSM 11845 / VT8) (Marinobacter aquaeolei).